Here is a 223-residue protein sequence, read N- to C-terminus: Cytidylate kinase (223 aa).

12-20 (GPSGVGKGT) serves as a coordination point for ATP.

The protein belongs to the cytidylate kinase family. Type 1 subfamily.

Its subcellular location is the cytoplasm. It catalyses the reaction CMP + ATP = CDP + ADP. It carries out the reaction dCMP + ATP = dCDP + ADP. In Xylella fastidiosa (strain 9a5c), this protein is Cytidylate kinase.